The following is a 248-amino-acid chain: Transcription factor MYBC1 (248 aa).

Residues 102-161 (TLKRPRLVWTPQLHKRFVDAVGHLGIKNAVPKTIMQLMSVEGLTRENVASHLQKYRLYLR) constitute a DNA-binding region (myb-like GARP).

As to expression, expressed in roots, leaves, stems, petioles, filaments, stigma, pedicels, sepals, anthers, petals, and siliques.

The protein localises to the nucleus. Functionally, probable transcription factor that acts as a negative regulator of freezing tolerance via a CBF-independent pathway. This Arabidopsis thaliana (Mouse-ear cress) protein is Transcription factor MYBC1.